The primary structure comprises 432 residues: Adenylosuccinate synthetase (432 aa).

Residues 13-19 (GDEGKGK) and 41-43 (GHT) contribute to the GTP site. Asp14 (proton acceptor) is an active-site residue. The Mg(2+) site is built by Asp14 and Gly41. Residues 14–17 (DEGK), 39–42 (NAGH), Thr130, Arg144, Gln225, Thr240, and Arg304 each bind IMP. His42 functions as the Proton donor in the catalytic mechanism. 300–306 (STTGRPR) lines the substrate pocket. GTP contacts are provided by residues Arg306, 332–334 (KLD), and 416–418 (STG).

This sequence belongs to the adenylosuccinate synthetase family. As to quaternary structure, homodimer. The cofactor is Mg(2+).

It is found in the cytoplasm. The catalysed reaction is IMP + L-aspartate + GTP = N(6)-(1,2-dicarboxyethyl)-AMP + GDP + phosphate + 2 H(+). It participates in purine metabolism; AMP biosynthesis via de novo pathway; AMP from IMP: step 1/2. Its function is as follows. Plays an important role in the de novo pathway of purine nucleotide biosynthesis. Catalyzes the first committed step in the biosynthesis of AMP from IMP. The sequence is that of Adenylosuccinate synthetase from Nitrosomonas europaea (strain ATCC 19718 / CIP 103999 / KCTC 2705 / NBRC 14298).